The following is a 365-amino-acid chain: Dehydroprecondylocarpine acetate synthase (365 aa).

Zn(2+) is bound by residues C105, C108, C111, and C119. 2 N-linked (GlcNAc...) asparagine glycosylation sites follow: N142 and N147. L194, G196, L197, S216, T217, T218, K221, L279, A281, S303, A305, and R350 together coordinate NADP(+).

This sequence belongs to the zinc-containing alcohol dehydrogenase family. In terms of assembly, homodimer. Interaction with catharanthine synthase (CS) and tabersonine synthase (TS). Requires Zn(2+) as cofactor.

It is found in the cytoplasm. The protein localises to the cytosol. It carries out the reaction dihydroprecondylocarpine acetate + NADP(+) = precondylocarpine acetate + NADPH + H(+). It participates in alkaloid biosynthesis. In terms of biological role, component of the seco-iridoid and derivatives monoterpenoid indole alkaloids (MIAs, e.g. vinblastine, catharanthine, tabersonine, vincadifformine, vindoline, vincristine, quinine and strychnine) biosynthesis pathway. Catalyzes the non-canonical 1,4-reduction of an alpha,beta-unsaturated iminium moiety; by contrast with the classic alcohol dehydrogenase mechanism, this reaction does not require a catalytic zinc or proton relay. Converts precondylocarpine acetate to dihydroprecondylocarpine acetate, that is spontaneously converted into dehydrosecodine intermediate, precursor of angryline. May also trigger the non-stereoselective 1,4-reduction reaction at C15 of dehydrosecodine leading to the production of secodine, a precursor of vincadifformine. This Catharanthus roseus (Madagascar periwinkle) protein is Dehydroprecondylocarpine acetate synthase.